Consider the following 1016-residue polypeptide: Coiled-coil domain-containing protein 57 (1016 aa).

The interval 1-503 (MLPLCSEREL…HGLLPGQEAQ (503 aa)) is centrosomal targeting domain. 3 coiled-coil regions span residues 14-607 (LARK…PVKT), 676-700 (SEVDQVHLEVLELQKQVAELRKHLK), and 748-775 (VTHLQRKLKDAARKILSLRLEREQLLEM). Disordered regions lie at residues 500 to 519 (QEAQVPPQQHEGEIRADSPS) and 549 to 573 (HLPPAQPEECSNADPDPKAGGDSTP). A microtubule binding domain region spans residues 604-1016 (PVKTSVATAD…SRIRNYNLKD (413 aa)). 2 disordered regions span residues 781–921 (AEQG…LASS) and 933–1016 (GSSP…NLKD). Polar residues-rich tracts occupy residues 846 to 859 (QPHSAQVGSKTNTP) and 934 to 945 (SSPSGVPSQDNS).

Interacts with CEP63; the interaction is required for their location to proximal end of centrioles. Interacts with microtubules.

The protein localises to the cytoplasm. The protein resides in the cytoskeleton. It localises to the microtubule organizing center. It is found in the centrosome. Its subcellular location is the centriolar satellite. The protein localises to the centriole. The protein resides in the spindle. Functionally, pleiotropic regulator of centriole duplication, mitosis, and ciliogenesis. Critical interface between centrosome and microtubule-mediated cellular processes. Centriole duplication protein required for recruitment of CEP63, CEP152, and PLK4 to the centrosome. Independent of its centrosomal targeting, localizes to and interacts with microtubules and regulates microtubule nucleation, stability, and mitotic progression. The chain is Coiled-coil domain-containing protein 57 from Mus musculus (Mouse).